Reading from the N-terminus, the 450-residue chain is UDP-N-acetylmuramoylalanine--D-glutamate ligase (450 aa).

ATP is bound at residue 119–125 (GSNGKTT).

Belongs to the MurCDEF family.

The protein localises to the cytoplasm. It carries out the reaction UDP-N-acetyl-alpha-D-muramoyl-L-alanine + D-glutamate + ATP = UDP-N-acetyl-alpha-D-muramoyl-L-alanyl-D-glutamate + ADP + phosphate + H(+). It participates in cell wall biogenesis; peptidoglycan biosynthesis. Its function is as follows. Cell wall formation. Catalyzes the addition of glutamate to the nucleotide precursor UDP-N-acetylmuramoyl-L-alanine (UMA). This chain is UDP-N-acetylmuramoylalanine--D-glutamate ligase, found in Bacillus cereus (strain ATCC 10987 / NRS 248).